A 40-amino-acid polypeptide reads, in one-letter code: Photosystem II reaction center protein J (40 aa).

A helical membrane pass occupies residues 10 to 30; that stretch reads LWLIGTVAGILVIGLVGIFFY.

It belongs to the PsbJ family. In terms of assembly, PSII is composed of 1 copy each of membrane proteins PsbA, PsbB, PsbC, PsbD, PsbE, PsbF, PsbH, PsbI, PsbJ, PsbK, PsbL, PsbM, PsbT, PsbX, PsbY, PsbZ, Psb30/Ycf12, at least 3 peripheral proteins of the oxygen-evolving complex and a large number of cofactors. It forms dimeric complexes.

It localises to the plastid. The protein resides in the chloroplast thylakoid membrane. In terms of biological role, one of the components of the core complex of photosystem II (PSII). PSII is a light-driven water:plastoquinone oxidoreductase that uses light energy to abstract electrons from H(2)O, generating O(2) and a proton gradient subsequently used for ATP formation. It consists of a core antenna complex that captures photons, and an electron transfer chain that converts photonic excitation into a charge separation. This Marchantia polymorpha (Common liverwort) protein is Photosystem II reaction center protein J.